An 84-amino-acid polypeptide reads, in one-letter code: MYSHENHVNFQIVVGIPLLIKAVILCIQNILEVLLEDIGILKMESIFLHTNITIIPHSVLYVSLSYYIINPCTSASSNFDDSFS.

2 helical membrane-spanning segments follow: residues 7–27 (HVNF…ILCI) and 52–72 (ITII…INPC).

Its subcellular location is the membrane. This is an uncharacterized protein from Saccharomyces cerevisiae (strain ATCC 204508 / S288c) (Baker's yeast).